The sequence spans 117 residues: Large ribosomal subunit protein bL20 (117 aa).

The protein belongs to the bacterial ribosomal protein bL20 family.

Functionally, binds directly to 23S ribosomal RNA and is necessary for the in vitro assembly process of the 50S ribosomal subunit. It is not involved in the protein synthesizing functions of that subunit. This chain is Large ribosomal subunit protein bL20, found in Campylobacter jejuni subsp. jejuni serotype O:6 (strain 81116 / NCTC 11828).